Here is a 61-residue protein sequence, read N- to C-terminus: Large ribosomal subunit protein bL28 (61 aa).

The disordered stretch occupies residues 1–26 (MAKDFVTGRKTTFGKKRSHALNQTNR).

This sequence belongs to the bacterial ribosomal protein bL28 family.

The protein is Large ribosomal subunit protein bL28 of Ligilactobacillus salivarius (strain UCC118) (Lactobacillus salivarius).